The chain runs to 276 residues: Secreted RxLR effector protein 85 (276 aa).

An N-terminal signal peptide occupies residues Met1–Ala27. The RxLR motif lies at Arg110–Arg113.

Belongs to the RxLR effector family.

The protein resides in the secreted. It is found in the host cell membrane. In terms of biological role, secreted effector that partially suppresses the host cell death induced by cell death-inducing proteins. The chain is Secreted RxLR effector protein 85 from Plasmopara viticola (Downy mildew of grapevine).